The chain runs to 271 residues: Ribosomal RNA small subunit methyltransferase A (271 aa).

S-adenosyl-L-methionine is bound by residues Leu-20, Gly-45, Glu-66, Asp-90, and Asn-112.

This sequence belongs to the class I-like SAM-binding methyltransferase superfamily. rRNA adenine N(6)-methyltransferase family. RsmA subfamily.

It is found in the cytoplasm. The catalysed reaction is adenosine(1518)/adenosine(1519) in 16S rRNA + 4 S-adenosyl-L-methionine = N(6)-dimethyladenosine(1518)/N(6)-dimethyladenosine(1519) in 16S rRNA + 4 S-adenosyl-L-homocysteine + 4 H(+). Functionally, specifically dimethylates two adjacent adenosines (A1518 and A1519) in the loop of a conserved hairpin near the 3'-end of 16S rRNA in the 30S particle. May play a critical role in biogenesis of 30S subunits. The chain is Ribosomal RNA small subunit methyltransferase A from Blochmanniella floridana.